The chain runs to 344 residues: Heat-inducible transcription repressor HrcA (344 aa).

Belongs to the HrcA family.

Functionally, negative regulator of class I heat shock genes (grpE-dnaK-dnaJ and groELS operons). Prevents heat-shock induction of these operons. The chain is Heat-inducible transcription repressor HrcA from Streptococcus equi subsp. zooepidemicus (strain MGCS10565).